Reading from the N-terminus, the 297-residue chain is Large ribosomal subunit protein uL18 (297 aa).

The protein belongs to the universal ribosomal protein uL18 family. In terms of assembly, component of the large ribosomal subunit (LSU).

Its subcellular location is the cytoplasm. The protein localises to the nucleus. Component of the ribosome, a large ribonucleoprotein complex responsible for the synthesis of proteins in the cell. The small ribosomal subunit (SSU) binds messenger RNAs (mRNAs) and translates the encoded message by selecting cognate aminoacyl-transfer RNA (tRNA) molecules. The large subunit (LSU) contains the ribosomal catalytic site termed the peptidyl transferase center (PTC), which catalyzes the formation of peptide bonds, thereby polymerizing the amino acids delivered by tRNAs into a polypeptide chain. The nascent polypeptides leave the ribosome through a tunnel in the LSU and interact with protein factors that function in enzymatic processing, targeting, and the membrane insertion of nascent chains at the exit of the ribosomal tunnel. This is Large ribosomal subunit protein uL18 (RpL5) from Lysiphlebus testaceipes (Greenbugs aphid parastoid).